The sequence spans 300 residues: ETS homologous factor (300 aa).

A PNT domain is found at 29–115; the sequence is STCNVSSGFF…SNLQHLKWNG (87 aa). The segment at 183-202 is disordered; the sequence is ESPDMKKEQDPPAKCHTKKH. Residues 185-195 show a composition bias toward basic and acidic residues; the sequence is PDMKKEQDPPA. Positions 207-289 form a DNA-binding region, ETS; the sequence is THLWEFIRDI…DGRRLVYKFG (83 aa).

This sequence belongs to the ETS family.

The protein resides in the nucleus. Its function is as follows. Transcriptional activator that may play a role in regulating epithelial cell differentiation and proliferation. May act as a repressor for a specific subset of ETS/AP-1-responsive genes, and as a modulator of the nuclear response to mitogen-activated protein kinase signaling cascades. Binds to DNA sequences containing the consensus nucleotide core sequence GGAA. Involved in regulation of TNFRSF10B/DR5 expression through Ets-binding sequences on the TNFRSF10B/DR5 promoter. The polypeptide is ETS homologous factor (EHF) (Pan paniscus (Pygmy chimpanzee)).